Consider the following 810-residue polypeptide: Hemoglobin-haptoglobin utilization protein B (810 aa).

Positions 1-22 (MPIPFKPVLAVAAIAQAFPAFA) are cleaved as a signal peptide. A TBDR plug domain is found at 34 to 166 (NEITVTGTHK…LGGAVNYQTK (133 aa)). The 636-residue stretch at 175–810 (DKPYHLGIKG…SYNFTIEAKF (636 aa)) folds into the TBDR beta-barrel domain. Residues 793–810 (QRFTSPGRSYNFTIEAKF) carry the TonB C-terminal box motif.

Belongs to the TonB-dependent receptor family.

The protein resides in the cell outer membrane. Its function is as follows. Acts as a receptor for hemoglobin or the hemoglobin/haptoglobin complex and is required for heme uptake. The chain is Hemoglobin-haptoglobin utilization protein B (hpuB) from Neisseria meningitidis serogroup C.